The chain runs to 330 residues: ADP-L-glycero-D-manno-heptose-6-epimerase (330 aa).

Residues F11–I12, D32–N33, K39, K54, E75–S79, and N92 each bind NADP(+). Y139 acts as the Proton acceptor in catalysis. K143 serves as a coordination point for NADP(+). N168 is a binding site for substrate. 2 residues coordinate NADP(+): V169 and K177. Catalysis depends on K177, which acts as the Proton acceptor. Substrate is bound by residues R179, H186, F200–Y203, R213, and Y292.

The protein belongs to the NAD(P)-dependent epimerase/dehydratase family. HldD subfamily. In terms of assembly, homopentamer. NADP(+) serves as cofactor.

The enzyme catalyses ADP-D-glycero-beta-D-manno-heptose = ADP-L-glycero-beta-D-manno-heptose. Its pathway is nucleotide-sugar biosynthesis; ADP-L-glycero-beta-D-manno-heptose biosynthesis; ADP-L-glycero-beta-D-manno-heptose from D-glycero-beta-D-manno-heptose 7-phosphate: step 4/4. Functionally, catalyzes the interconversion between ADP-D-glycero-beta-D-manno-heptose and ADP-L-glycero-beta-D-manno-heptose via an epimerization at carbon 6 of the heptose. This is ADP-L-glycero-D-manno-heptose-6-epimerase from Paraburkholderia xenovorans (strain LB400).